Here is a 324-residue protein sequence, read N- to C-terminus: Glyoxylate/hydroxypyruvate reductase B (324 aa).

Residues arginine 237 and glutamate 266 contribute to the active site. The active-site Proton donor is the histidine 285.

The protein belongs to the D-isomer specific 2-hydroxyacid dehydrogenase family. GhrB subfamily. As to quaternary structure, homodimer.

It localises to the cytoplasm. The catalysed reaction is glycolate + NADP(+) = glyoxylate + NADPH + H(+). It catalyses the reaction (R)-glycerate + NAD(+) = 3-hydroxypyruvate + NADH + H(+). It carries out the reaction (R)-glycerate + NADP(+) = 3-hydroxypyruvate + NADPH + H(+). Catalyzes the NADPH-dependent reduction of glyoxylate and hydroxypyruvate into glycolate and glycerate, respectively. The sequence is that of Glyoxylate/hydroxypyruvate reductase B from Escherichia fergusonii (strain ATCC 35469 / DSM 13698 / CCUG 18766 / IAM 14443 / JCM 21226 / LMG 7866 / NBRC 102419 / NCTC 12128 / CDC 0568-73).